The chain runs to 248 residues: Probable transcriptional regulatory protein AZC_0510 (248 aa).

It belongs to the TACO1 family.

Its subcellular location is the cytoplasm. This chain is Probable transcriptional regulatory protein AZC_0510, found in Azorhizobium caulinodans (strain ATCC 43989 / DSM 5975 / JCM 20966 / LMG 6465 / NBRC 14845 / NCIMB 13405 / ORS 571).